The following is a 230-amino-acid chain: Protein FAM3A (230 aa).

The signal sequence occupies residues 1–33 (MRLAGPLRIVALVVSVGLTWIVVSILLGGPGSG). 2 disulfide bridges follow: C59/C87 and C65/C222. The GG-type lectin domain maps to 68-226 (EHLAFRVVSG…LEMEGCIPRR (159 aa)).

The protein belongs to the FAM3 family.

It is found in the secreted. This chain is Protein FAM3A (FAM3A), found in Pongo abelii (Sumatran orangutan).